The following is a 1358-amino-acid chain: DNA-directed RNA polymerase subunit beta (1358 aa).

Belongs to the RNA polymerase beta chain family. The RNAP catalytic core consists of 2 alpha, 1 beta, 1 beta' and 1 omega subunit. When a sigma factor is associated with the core the holoenzyme is formed, which can initiate transcription.

The enzyme catalyses RNA(n) + a ribonucleoside 5'-triphosphate = RNA(n+1) + diphosphate. DNA-dependent RNA polymerase catalyzes the transcription of DNA into RNA using the four ribonucleoside triphosphates as substrates. The polypeptide is DNA-directed RNA polymerase subunit beta (Methylococcus capsulatus (strain ATCC 33009 / NCIMB 11132 / Bath)).